Reading from the N-terminus, the 387-residue chain is Chaperone protein DnaJ (387 aa).

In terms of domain architecture, J spans 5–70 (DYYEVLGLQK…DKKAKYDQFG (66 aa)). A CR-type zinc finger spans residues 144–226 (GCEKEISITR…CKGKGTVRKN (83 aa)). Zn(2+) contacts are provided by cysteine 157, cysteine 160, cysteine 174, cysteine 177, cysteine 200, cysteine 203, cysteine 214, and cysteine 217. CXXCXGXG motif repeat units follow at residues 157-164 (CETCHGTG), 174-181 (CPKCNGSG), 200-207 (CDQCGGTG), and 214-221 (CPDCKGKG).

It belongs to the DnaJ family. In terms of assembly, homodimer. Requires Zn(2+) as cofactor.

It localises to the cytoplasm. Functionally, participates actively in the response to hyperosmotic and heat shock by preventing the aggregation of stress-denatured proteins and by disaggregating proteins, also in an autonomous, DnaK-independent fashion. Unfolded proteins bind initially to DnaJ; upon interaction with the DnaJ-bound protein, DnaK hydrolyzes its bound ATP, resulting in the formation of a stable complex. GrpE releases ADP from DnaK; ATP binding to DnaK triggers the release of the substrate protein, thus completing the reaction cycle. Several rounds of ATP-dependent interactions between DnaJ, DnaK and GrpE are required for fully efficient folding. Also involved, together with DnaK and GrpE, in the DNA replication of plasmids through activation of initiation proteins. This Clostridium perfringens (strain 13 / Type A) protein is Chaperone protein DnaJ.